The chain runs to 729 residues: Triadin (729 aa).

A disordered region spans residues 1-28 (MTEITAEGNASTTTTVIDSKNGSVPKSP). Topologically, residues 1–47 (MTEITAEGNASTTTTVIDSKNGSVPKSPGKVLKRTVTEDIVTTFSSP) are cytoplasmic. Residues 8–24 (GNASTTTTVIDSKNGSV) are compositionally biased toward polar residues. A helical transmembrane segment spans residues 48–68 (AAWLLVIALIITWSAVAIVMF). Residues 69-729 (DLVDYKNFSA…NSPGQKQQGQ (661 aa)) are Lumenal-facing. The N-linked (GlcNAc...) asparagine glycan is linked to Asn-75. A compositionally biased stretch (acidic residues) spans 117 to 129 (EDEEDDDGDEDTD). Disordered stretches follow at residues 117–265 (EDEE…EQKD), 281–682 (DLKP…PTKQ), and 705–729 (PFTPADRPGESSGQANSPGQKQQGQ). 8 stretches are compositionally biased toward basic and acidic residues: residues 130 to 265 (KGEI…EQKD), 309 to 357 (LEEK…KASE), 371 to 433 (AKKD…KEEI), 444 to 509 (GKKE…EVKP), 516 to 531 (GKKEEKPEPQIKKEAK), 538 to 562 (VQIHKQDIVKPEKTVSHGKPEEKVL), 580 to 598 (KKAEHREREPPSIKTDKPK), and 609 to 674 (ESGK…KEGT). N-linked (GlcNAc...) asparagine glycosylation occurs at Asn-647. Residues 715-729 (SSGQANSPGQKQQGQ) show a composition bias toward polar residues.

As to quaternary structure, homooligomer of variable subunit number; disulfide-linked. Interacts with CASQ1 and RYR1 in skeletal muscle. Interacts with CASQ2. In terms of processing, phosphorylated by CaMK2. N-glycosylated.

It is found in the cell membrane. It localises to the sarcoplasmic reticulum membrane. Contributes to the regulation of lumenal Ca2+ release via the sarcoplasmic reticulum calcium release channels RYR1 and RYR2, a key step in triggering skeletal and heart muscle contraction. Required for normal organization of the triad junction, where T-tubules and the sarcoplasmic reticulum terminal cisternae are in close contact. Required for normal skeletal muscle strength. Plays a role in excitation-contraction coupling in the heart and in regulating the rate of heart beats. The protein is Triadin (TRDN) of Homo sapiens (Human).